The sequence spans 751 residues: Semaphorin-3C (751 aa).

The N-terminal stretch at 1–21 is a signal peptide; the sequence is MAFQAVCILVGVFVCSTYVKG. One can recognise a Sema domain in the interval 28–511; sequence RVYLTFDELR…SNEGLAQVSL (484 aa). Asn-81 carries N-linked (GlcNAc...) asparagine glycosylation. Cys-101 and Cys-112 are oxidised to a cystine. N-linked (GlcNAc...) asparagine glycosylation occurs at Asn-123. 3 cysteine pairs are disulfide-bonded: Cys-130–Cys-139, Cys-266–Cys-378, and Cys-290–Cys-338. Asn-268 carries N-linked (GlcNAc...) asparagine glycosylation. The N-linked (GlcNAc...) asparagine glycan is linked to Asn-465. The cysteines at positions 514 and 532 are disulfide-linked. The 85-residue stretch at 571 to 655 folds into the Ig-like C2-type domain; sequence AYRNAAEIVQ…TENSFKQTIA (85 aa). Asn-585 and Asn-586 each carry an N-linked (GlcNAc...) asparagine glycan. A disulfide bridge links Cys-592 with Cys-643. A compositionally biased stretch (basic and acidic residues) spans 712-731; that stretch reads TRQQHQQGEESQKMRGDYGK. The segment at 712-751 is disordered; sequence TRQQHQQGEESQKMRGDYGKLKALINSRKSRNRRNQLPES.

The protein belongs to the semaphorin family. In terms of assembly, interacts with PLXND1.

It is found in the secreted. Functionally, binds to plexin family members and plays an important role in the regulation of developmental processes. Required for normal cardiovascular development during embryogenesis. Functions as attractant for growing axons, and thereby plays an important role in axon growth and axon guidance. This Bos taurus (Bovine) protein is Semaphorin-3C (SEMA3C).